A 394-amino-acid chain; its full sequence is MVKKVALAYSGGLDTSVCIPILKEKYGYDEVITISVDVGQPEEEIKKADAKAEKISNKHYTIDAKEEFVKDYIFPLIKANGDYEGYVMGTSVARPLIAKKVVEAAIKEGAVALAHGCTGKGNDQLRFEAVFRQTDMDVIAPMREMNLTREWEIDYAKEHGIPVEVTKAKPWSVDENIWSRSIEGGKLEDPSFVPPEEIFEWTKSAEDAPNEPRIVDIDFEAGVPVALDGEKLGGYALVRKLNEIAGENGVGRTDMIEDRVLGLKARENYEHPAATVLLAAHADLEKLVLTRGELKFKKIVDEQWSELAYYGLVDEPLYADLNAFIDKSQERVTGTVKVKLYKGALTILARSSPNALYSEDLVSFDSQTIDQKDAEGFAKYHGFQARMYRKVMEK.

Alanine 8 to serine 16 lines the ATP pocket. L-citrulline contacts are provided by tyrosine 86 and serine 91. Glycine 116 is a binding site for ATP. L-aspartate contacts are provided by threonine 118, asparagine 122, and aspartate 123. Residue asparagine 122 participates in L-citrulline binding. Residues arginine 126, serine 172, serine 181, glutamate 257, and tyrosine 269 each contribute to the L-citrulline site.

Belongs to the argininosuccinate synthase family. Type 1 subfamily. In terms of assembly, homotetramer.

It localises to the cytoplasm. The catalysed reaction is L-citrulline + L-aspartate + ATP = 2-(N(omega)-L-arginino)succinate + AMP + diphosphate + H(+). Its pathway is amino-acid biosynthesis; L-arginine biosynthesis; L-arginine from L-ornithine and carbamoyl phosphate: step 2/3. The protein is Argininosuccinate synthase of Methanosarcina acetivorans (strain ATCC 35395 / DSM 2834 / JCM 12185 / C2A).